The following is a 492-amino-acid chain: Glycerol kinase 1 (492 aa).

Residue threonine 10 participates in ADP binding. Residues threonine 10 and serine 11 each coordinate ATP. Threonine 10 contacts sn-glycerol 3-phosphate. An ADP-binding site is contributed by lysine 14. Positions 80, 81, 132, and 241 each coordinate sn-glycerol 3-phosphate. 4 residues coordinate glycerol: arginine 80, glutamate 81, tyrosine 132, and aspartate 241. ADP-binding residues include threonine 263, glycine 306, glycine 407, and asparagine 411. Residues threonine 263, glycine 306, and glycine 407 each coordinate ATP.

It belongs to the FGGY kinase family.

It catalyses the reaction glycerol + ATP = sn-glycerol 3-phosphate + ADP + H(+). It participates in polyol metabolism; glycerol degradation via glycerol kinase pathway; sn-glycerol 3-phosphate from glycerol: step 1/1. Its activity is regulated as follows. Inhibited by fructose 1,6-bisphosphate (FBP). Its function is as follows. Key enzyme in the regulation of glycerol uptake and metabolism. Catalyzes the phosphorylation of glycerol to yield sn-glycerol 3-phosphate. In Thermotoga maritima (strain ATCC 43589 / DSM 3109 / JCM 10099 / NBRC 100826 / MSB8), this protein is Glycerol kinase 1.